The following is a 1018-amino-acid chain: Antigenic heat-stable 120 kDa protein (1018 aa).

Residues 1–11 (MSKDGNLNTSE) are compositionally biased toward polar residues. Disordered stretches follow at residues 1-82 (MSKD…DPIT), 355-402 (GQSK…MPQS), and 995-1018 (RDSI…PPQR). The span at 19–34 (EYTEEQKQTLEQEQKE) shows a compositional bias: basic and acidic residues. Low complexity predominate over residues 53–68 (TSASSAQSTPSTSALS). 4 stretches are compositionally biased toward polar residues: residues 69 to 80 (GNISPDSQTSDP), 355 to 380 (GQSK…QYKQ), 387 to 402 (PTNQ…MPQS), and 996 to 1007 (DSIQSENLNKST). Over residues 1009 to 1018 (IKRESSPPQR) the composition is skewed to basic and acidic residues.

The protein resides in the cytoplasm. This is Antigenic heat-stable 120 kDa protein (sca4) from Rickettsia japonica (strain ATCC VR-1363 / YH).